The primary structure comprises 184 residues: Female-specific protein transformer (184 aa).

Composition is skewed to basic and acidic residues over residues 1-39 (MKMD…DSRK) and 49-58 (DEVREQDRIR). Disordered stretches follow at residues 1–123 (MKMD…PKII) and 146–184 (YQRL…RPPY). Basic residues-rich tracts occupy residues 59-75 (SLRQ…RSRS) and 84-114 (SRHR…RSPH). Pro residues predominate over residues 150–159 (PRPPPFPPAP).

The protein resides in the nucleus speckle. Functionally, member of the regulatory pathway controlling female somatic sexual differentiation, regulated by Sxl. Activates dsx female-specific splicing by promoting the formation of a splicing enhancer complex which consists of tra, tra2 and sr proteins. This is Female-specific protein transformer (tra) from Drosophila simulans (Fruit fly).